We begin with the raw amino-acid sequence, 145 residues long: Protein SprT-like (145 aa).

Residues 4–141 (TDYVKEVSRQ…CGNCHGKLRH (138 aa)) form the SprT-like domain. H64 lines the Zn(2+) pocket. E65 is an active-site residue. H68 is a Zn(2+) binding site.

The protein belongs to the SprT family. Zn(2+) is required as a cofactor.

The protein localises to the cytoplasm. The polypeptide is Protein SprT-like (Streptococcus mutans serotype c (strain ATCC 700610 / UA159)).